The primary structure comprises 571 residues: Glutamate--tRNA ligase (571 aa).

Basic and acidic residues predominate over residues 75–88 (GGPREDVARDKEGL). A disordered region spans residues 75 to 98 (GGPREDVARDKEGLKPLPGAEPGN). The 'HIGH' region signature appears at 105-115 (PNPSGPLHIGH).

This sequence belongs to the class-I aminoacyl-tRNA synthetase family. Glutamate--tRNA ligase type 2 subfamily.

Its subcellular location is the cytoplasm. It catalyses the reaction tRNA(Glu) + L-glutamate + ATP = L-glutamyl-tRNA(Glu) + AMP + diphosphate. Its function is as follows. Catalyzes the attachment of glutamate to tRNA(Glu) in a two-step reaction: glutamate is first activated by ATP to form Glu-AMP and then transferred to the acceptor end of tRNA(Glu). This chain is Glutamate--tRNA ligase, found in Methanopyrus kandleri (strain AV19 / DSM 6324 / JCM 9639 / NBRC 100938).